Consider the following 186-residue polypeptide: Golgi apparatus membrane protein-like protein ECHIDNA (186 aa).

Methionine 1 carries the post-translational modification N-acetylmethionine. 3 helical membrane-spanning segments follow: residues 35–55 (ILSA…VLLA), 108–128 (FWWT…FSLI), and 132–152 (ADYL…IIGF).

It belongs to the TVP23 family. Component of a trans-Golgi network (TGN)-localized ECH/YIP4 complex made of ECH, YIP4A and YIP4B. Interacts directly with YIP4A and YIP4B.

The protein localises to the golgi apparatus. The protein resides in the trans-Golgi network membrane. Its subcellular location is the early endosome membrane. Mediates trans-Golgi-network trafficking and cell elongation. Required for keeping the appropriate balance between secretory trafficking and vacuolar targeting of a subset of proteins. The ECH/YIP4 complex is involved in the modulation of the trans-Golgi network (TGN)-mediated trafficking of some proteins and cell wall components (e.g. pectin and hemicellulose) to the cell wall in dark-grown hypocotyls and in secretory cells of the seed coat. The sequence is that of Golgi apparatus membrane protein-like protein ECHIDNA from Arabidopsis thaliana (Mouse-ear cress).